Consider the following 657-residue polypeptide: tRNA 5-methylaminomethyl-2-thiouridine biosynthesis bifunctional protein MnmC (657 aa).

The segment at 1-239 (MTDRIVPATL…KRAMLVGEFA (239 aa)) is tRNA (mnm(5)s(2)U34)-methyltransferase. The segment at 263–657 (IGAGLAGCAV…VRALRHGRVA (395 aa)) is FAD-dependent cmnm(5)s(2)U34 oxidoreductase.

This sequence in the N-terminal section; belongs to the methyltransferase superfamily. tRNA (mnm(5)s(2)U34)-methyltransferase family. In the C-terminal section; belongs to the DAO family. The cofactor is FAD.

It is found in the cytoplasm. It carries out the reaction 5-aminomethyl-2-thiouridine(34) in tRNA + S-adenosyl-L-methionine = 5-methylaminomethyl-2-thiouridine(34) in tRNA + S-adenosyl-L-homocysteine + H(+). In terms of biological role, catalyzes the last two steps in the biosynthesis of 5-methylaminomethyl-2-thiouridine (mnm(5)s(2)U) at the wobble position (U34) in tRNA. Catalyzes the FAD-dependent demodification of cmnm(5)s(2)U34 to nm(5)s(2)U34, followed by the transfer of a methyl group from S-adenosyl-L-methionine to nm(5)s(2)U34, to form mnm(5)s(2)U34. This Burkholderia mallei (strain SAVP1) protein is tRNA 5-methylaminomethyl-2-thiouridine biosynthesis bifunctional protein MnmC.